The following is a 376-amino-acid chain: 5-amino-6-(D-ribitylamino)uracil--L-tyrosine 4-hydroxyphenyl transferase 1 (376 aa).

The Radical SAM core domain maps to Val-50–Ala-275. Cys-64, Cys-68, and Cys-71 together coordinate [4Fe-4S] cluster.

It belongs to the radical SAM superfamily. CofH family. In terms of assembly, consists of two subunits, CofG and CofH. It depends on [4Fe-4S] cluster as a cofactor.

The enzyme catalyses 5-amino-6-(D-ribitylamino)uracil + L-tyrosine + S-adenosyl-L-methionine = 5-amino-5-(4-hydroxybenzyl)-6-(D-ribitylimino)-5,6-dihydrouracil + 2-iminoacetate + 5'-deoxyadenosine + L-methionine + H(+). It participates in cofactor biosynthesis; coenzyme F0 biosynthesis. Catalyzes the radical-mediated synthesis of 5-amino-5-(4-hydroxybenzyl)-6-(D-ribitylimino)-5,6-dihydrouracil from 5-amino-6-(D-ribitylamino)uracil and L-tyrosine. In Methanosarcina mazei (strain ATCC BAA-159 / DSM 3647 / Goe1 / Go1 / JCM 11833 / OCM 88) (Methanosarcina frisia), this protein is 5-amino-6-(D-ribitylamino)uracil--L-tyrosine 4-hydroxyphenyl transferase 1.